Reading from the N-terminus, the 377-residue chain is MTNTLQMTRRTMLTGAAVAGALTPILTSGGGNASPTPVRKLSATEIAALPRRKLDLVKPPFVHVHTQKAEGGPKVVEVTLTIEEKKLVIDGKGTEVNAMTFDGSVPGPLIVVHQDDYVEVTLVNPETNTLQHNIDFHSATGALGGGALTVVNPGESAVLRFKATKAGVFVYHCAPPGMVPWHVTSGMNGAIMVLPREGLTDGHGKELVYDKVYYLGEQDFYIPRDEKGEFKKYDSPGEAYEDTVAVMRTLTPTHIVFNGAVGALTGENALTAAVGERVLIVHSQANRDTRPHLIGGHGEYVWRTGKFVNVPDRDQETWFIPGPTRGAAYYTFEQPGIYAYVNHNLIEAFELGAAAHFKVTGDWNDDLMTTVRSPSGS.

A signal peptide (tat-type signal) is located at residues 1–35 (MTNTLQMTRRTMLTGAAVAGALTPILTSGGGNASP). 2 consecutive Plastocyanin-like domains span residues 99 to 194 (MTFD…IMVL) and 259 to 360 (GAVG…FKVT). Positions 132, 137, 172, 173, 182, 187, and 343 each coordinate Cu cation.

This sequence belongs to the multicopper oxidase family. As to quaternary structure, homotrimer. Requires Cu(2+) as cofactor. Cu(+) serves as cofactor. The cofactor is FAD. In terms of processing, predicted to be exported by the Tat system. The position of the signal peptide cleavage has not been experimentally proven.

The protein resides in the periplasm. The catalysed reaction is nitric oxide + Fe(III)-[cytochrome c] + H2O = Fe(II)-[cytochrome c] + nitrite + 2 H(+). It functions in the pathway nitrogen metabolism; nitrate reduction (denitrification); dinitrogen from nitrate: step 2/4. The protein is Copper-containing nitrite reductase (nirK) of Rhizobium sullae (Rhizobium hedysari).